Reading from the N-terminus, the 510-residue chain is MIWHVQNENFILDSTRIFMKAFHLLLFHGSFIFPECILIFGLILLLMIDSTSDQKDRPWFYFISSTSLVISITALLFRWREEPIISFSGNFQTNNFNEIFQFLILLCSTLCIPLSVEYIECTEMAITEFLLFVLTATLGGMFLCGANDLITIFVAPECFSLCSYLLSGYTKRDVRSNEATMKYLLMGGASSSILVHGFSWLYGSSGGEIELQEIVNGLINTQMYNSPGISIALIFITVGIGFKLSPAPFHQWTPDVYEGSPTPVVAFLSVTSKVAASASATRIFDIPFYFSSNEWHLLLEILAILSMILGNLIAITQTSMKRMLAYSSIGQIGYVIIGIIVGDSNDGYASMITYMLFYISMNLGTFACIVLFGLRTGTDNIRDYAGLYTKDPFLALSSALCLLSLGGLPPLAGFFGKLYLFWCGWQAGLYFLVSIGLLTSVVSIYYYLKIIKLLMTGRNQEITPYVRNYRRSPLRSNNSIELSMTVCVIASTIPGISMNPILAIAQDXLF.

12 consecutive transmembrane segments (helical) span residues 24 to 44 (LLLFHGSFIFPECILIFGLIL), 59 to 79 (WFYFISSTSLVISITALLFRW), 99 to 119 (IFQFLILLCSTLCIPLSVEYI), 124 to 144 (MAITEFLLFVLTATLGGMFLC), 149 to 169 (LITIFVAPECFSLCSYLLSGY), 183 to 203 (YLLMGGASSSILVHGFSWLYG), 229 to 249 (ISIALIFITVGIGFKLSPAPF), 295 to 315 (WHLLLEILAILSMILGNLIAI), 323 to 343 (MLAYSSIGQIGYVIIGIIVGD), 354 to 374 (YMLFYISMNLGTFACIVLFGL), 395 to 415 (ALSSALCLLSLGGLPPLAGFF), and 418 to 438 (LYLFWCGWQAGLYFLVSIGLL).

The protein belongs to the complex I subunit 2 family. As to quaternary structure, NDH is composed of at least 16 different subunits, 5 of which are encoded in the nucleus.

The protein resides in the plastid. Its subcellular location is the chloroplast thylakoid membrane. It carries out the reaction a plastoquinone + NADH + (n+1) H(+)(in) = a plastoquinol + NAD(+) + n H(+)(out). The enzyme catalyses a plastoquinone + NADPH + (n+1) H(+)(in) = a plastoquinol + NADP(+) + n H(+)(out). Its function is as follows. NDH shuttles electrons from NAD(P)H:plastoquinone, via FMN and iron-sulfur (Fe-S) centers, to quinones in the photosynthetic chain and possibly in a chloroplast respiratory chain. The immediate electron acceptor for the enzyme in this species is believed to be plastoquinone. Couples the redox reaction to proton translocation, and thus conserves the redox energy in a proton gradient. This Ananas comosus (Pineapple) protein is NAD(P)H-quinone oxidoreductase subunit 2, chloroplastic.